The primary structure comprises 326 residues: Meiotically up-regulated gene 113 protein (326 aa).

Its subcellular location is the cytoplasm. In terms of biological role, has a role in meiosis. In Schizosaccharomyces pombe (strain 972 / ATCC 24843) (Fission yeast), this protein is Meiotically up-regulated gene 113 protein (mug113).